The following is a 932-amino-acid chain: Glycine dehydrogenase (decarboxylating) (932 aa).

Lysine 685 carries the post-translational modification N6-(pyridoxal phosphate)lysine.

It belongs to the GcvP family. In terms of assembly, the glycine cleavage system is composed of four proteins: P, T, L and H. Pyridoxal 5'-phosphate serves as cofactor.

It catalyses the reaction N(6)-[(R)-lipoyl]-L-lysyl-[glycine-cleavage complex H protein] + glycine + H(+) = N(6)-[(R)-S(8)-aminomethyldihydrolipoyl]-L-lysyl-[glycine-cleavage complex H protein] + CO2. The glycine cleavage system catalyzes the degradation of glycine. The P protein binds the alpha-amino group of glycine through its pyridoxal phosphate cofactor; CO(2) is released and the remaining methylamine moiety is then transferred to the lipoamide cofactor of the H protein. The chain is Glycine dehydrogenase (decarboxylating) from Brucella abortus (strain S19).